The primary structure comprises 61 residues: Large ribosomal subunit protein eL37 (61 aa).

Cys-19, Cys-22, Cys-34, and Cys-37 together coordinate Zn(2+). A C4-type zinc finger spans residues 19–37 (CRRCGRNAYNVSKHYCAAC).

This sequence belongs to the eukaryotic ribosomal protein eL37 family. It depends on Zn(2+) as a cofactor.

Functionally, binds to the 23S rRNA. The chain is Large ribosomal subunit protein eL37 from Saccharolobus islandicus (strain L.S.2.15 / Lassen #1) (Sulfolobus islandicus).